Here is a 616-residue protein sequence, read N- to C-terminus: Carboxylic acid transporter protein homolog (616 aa).

A compositionally biased stretch (basic and acidic residues) spans 1-11 (MSSSITDEKIS). Positions 1–65 (MSSSITDEKI…LYHNPSLPAQ (65 aa)) are disordered. Position 2 is an N-acetylserine (S2). The Cytoplasmic portion of the chain corresponds to 2–140 (SSSITDEKIS…LRKMTWQNWN (139 aa)). Residue S4 is modified to Phosphoserine. Residue K9 forms a Glycyl lysine isopeptide (Lys-Gly) (interchain with G-Cter in ubiquitin) linkage. A phosphoserine mark is found at S11, S61, and S66. T70 carries the post-translational modification Phosphothreonine. A helical membrane pass occupies residues 141–161 (YFFMGYFAWLSAAWAFFCVSV). At 162-176 (SVAPLAELYDRPTKD) the chain is on the extracellular side. The chain crosses the membrane as a helical span at residues 177–197 (ITWGLGLVLFVRSAGAVIFGL). Over 198-205 (WTDKSSRK) the chain is Cytoplasmic. A helical transmembrane segment spans residues 206–226 (WPYITCLFLFVIAQLCTPWCD). Residues 227–230 (TYEK) are Extracellular-facing. A helical transmembrane segment spans residues 231 to 251 (FLGVRWITGIAMGGIYGCASA). Over 252–263 (TAIEDAPVKARS) the chain is Cytoplasmic. A helical membrane pass occupies residues 264 to 284 (FLSGLFFSAYAMGFIFAIIFY). Over 285–296 (RAFGYFRDDGWK) the chain is Extracellular. Residues 297–317 (ILFWFSIFLPILLIFWRLLWP) traverse the membrane as a helical segment. Topologically, residues 318-363 (ETKYFTKVLKARKLILSDAVKANGGEPLPKANFKQKMVSMKRTVQK) are cytoplasmic. K338 is covalently cross-linked (Glycyl lysine isopeptide (Lys-Gly) (interchain with G-Cter in ubiquitin)). Residues 364–384 (YWLLFAYLVVLLVGPNYLTHA) form a helical membrane-spanning segment. The Extracellular segment spans residues 385-402 (SQDLLPTMLRAQLGLSKD). The helical transmembrane segment at 403-423 (AVTVIVVVTNIGAICGGMIFG) threads the bilayer. Over 424-432 (QFMEVTGRR) the chain is Cytoplasmic. The chain crosses the membrane as a helical span at residues 433 to 453 (LGLLIACTMGGCFTYPAFMLR). The Extracellular portion of the chain corresponds to 454–457 (SEKA). A helical membrane pass occupies residues 458–478 (ILGAGFMLYFCVFGVWGILPI). At 479–489 (HLAELAPADAR) the chain is on the cytoplasmic side. Residues 490 to 510 (ALVAGLSYQLGNLASAAASTI) traverse the membrane as a helical segment. The Extracellular segment spans residues 511 to 535 (ETQLADRYPLERDASGAVIKEDYAK). A helical membrane pass occupies residues 536–556 (VMAILTGSVFIFTFACVFVGH). Topologically, residues 557 to 616 (EKFHRDLSSPVMKKYINQVEEYEADGLSISDIVEQKTECASVKMIDSNVSKTYEEHIETV) are cytoplasmic. Residues S584, S603, and S606 each carry the phosphoserine modification.

This sequence belongs to the major facilitator superfamily. Sugar transporter (TC 2.A.1.1) family.

Its subcellular location is the membrane. Functionally, essential to lactate transport. This chain is Carboxylic acid transporter protein homolog (JEN1), found in Saccharomyces cerevisiae (strain ATCC 204508 / S288c) (Baker's yeast).